Here is a 1153-residue protein sequence, read N- to C-terminus: Myosin-3 (1153 aa).

The Myosin N-terminal SH3-like domain maps to 104-153; that stretch reads KKVLQFWVQLPNGNWELGKIMSTSGEESVIVVTEGKVLKVKSETLVPANP. Residues 157-829 form the Myosin motor domain; sequence DGVDDLMQLS…QIGVLEDTRN (673 aa). Residues 248 to 255 and 296 to 304 contribute to the ATP site; these read GESGAGKT and NDNSSRFGK. 2 actin-binding regions span residues 581-615 and 709-731; these read LFEK…KQHL and LFQL…KPNN. IQ domains follow at residues 831-860, 854-883, and 903-932; these read TLHG…GITI, LKTG…RHRA, and TVDA…LSSG. Residues 948-996 are a coiled coil; it reads YLSDLQRRVLRTEAALREKEEENDILRQRVQQYDNRWSEYETKMKSMEE. The tract at residues 1020–1050 is disordered; that stretch reads DSARNSDASVNASDATDLDSGGSHYQMGHGR. Positions 1024 to 1033 are enriched in polar residues; it reads NSDASVNASD.

Belongs to the TRAFAC class myosin-kinesin ATPase superfamily. Myosin family. Plant myosin class VIII subfamily. As to quaternary structure, homodimer.

Myosin heavy chain that is required for the cell cycle-regulated transport of various organelles and proteins for their segregation. Functions by binding with its tail domain to receptor proteins on organelles and exerting force with its N-terminal motor domain against actin filaments, thereby transporting its cargo along polarized actin cables. This chain is Myosin-3 (VIII-A), found in Arabidopsis thaliana (Mouse-ear cress).